Consider the following 630-residue polypeptide: MAKVIGIDLGTTNSCVAVMEGGKPKVIENAEGARTTPSIVAFAKDGERLIGQPAKRQAVTNPDNTIFAVKRLIGRRFDDPITRKDTELVPYHIVKGPNGDAWVQAGGEDYSPSQISAFTLQKMKETAESYLGETVTQAVITVPAYFNDAQRQATKDAGKIAGLEVLRIINEPTAAALAYGLEKNDGKTIAVYDLGGGTFDISILEIGDGVFEVKSTNGDTFLGGEDFDAKLVEFFAADFQKAEGIDLTKDRLALQRLKEAAEKAKIELSSAQTTEVNLPFITADATGPKHLVKSLTRADLERLVEPLIQRSIEPVKKALADAGLKAADIDEVVMVGGMTRMPKVREVVKSYFGKEPHTGVNPDEVVAMGAAIQAGVLQGDVKDVLLLDVTPLSLGIETLGGVFTRMIDRNTTIPTKKSQTYSTADDNQNAVTIRVFQGEREMAADNKMLGQFDLIGIPPAPRGVPQIEVTFDIDANGIVNVSAKDKGTGKEQQIKIQASGGLSDADIDGMVKDAEKFAEEDKKRRAAAEAKNNAESLIHTTERQLQEHGDKVDGGLKSEIEAAIADAKTAVEGGDADAMTEKAQALAQVAMKLGQAIYEKEQAAAAAPGEEAPKDDDVVDAEFSEVDDKK.

Residue threonine 198 is modified to Phosphothreonine; by autocatalysis. Positions 604-630 are disordered; the sequence is AAAAPGEEAPKDDDVVDAEFSEVDDKK. Positions 617-630 are enriched in acidic residues; the sequence is DVVDAEFSEVDDKK.

This sequence belongs to the heat shock protein 70 family.

In terms of biological role, acts as a chaperone. The protein is Chaperone protein DnaK of Rhizorhabdus wittichii (strain DSM 6014 / CCUG 31198 / JCM 15750 / NBRC 105917 / EY 4224 / RW1) (Sphingomonas wittichii).